The following is a 282-amino-acid chain: tRNA U34 carboxymethyltransferase (282 aa).

Carboxy-S-adenosyl-L-methionine is bound by residues Lys54, Trp68, Lys73, Gly92, 114-116, Tyr161, and Arg276; that span reads DPS.

It belongs to the class I-like SAM-binding methyltransferase superfamily. CmoB family. Homotetramer.

The enzyme catalyses carboxy-S-adenosyl-L-methionine + 5-hydroxyuridine(34) in tRNA = 5-carboxymethoxyuridine(34) in tRNA + S-adenosyl-L-homocysteine + H(+). In terms of biological role, catalyzes carboxymethyl transfer from carboxy-S-adenosyl-L-methionine (Cx-SAM) to 5-hydroxyuridine (ho5U) to form 5-carboxymethoxyuridine (cmo5U) at position 34 in tRNAs. The chain is tRNA U34 carboxymethyltransferase from Campylobacter fetus subsp. fetus (strain 82-40).